The chain runs to 421 residues: MATQLPSPTATTSHSGNEPRRVIRESCNNCSAQKIRCGKQRPACARCVNKKLQCNYSYSQRSGRRSSSMNTQRGGPHIAFLPGIPDTPATMPDANAMSAMYGSLTTSSPGLQGTTLSPSIETSLEYDQNPFEDPNQYHDLTFDFLASPPNTEPLHSRSTSSNTGTDMGDTAMVDSEAFWHSFPSMPPQNLDALRSVSNHPIFDQDQVASFRRSLEKTVQHGHDCMALALQVVNDLSVTREPCLVATSNPMTGIETHQMQARDVDTVLFINRDAAQSVKKILDCSCSSDQAVSLACYLATSKIVDWYGAAIEAVGERTEDFSKNAGPKTSQGIMAERIIARPIYMGKYCLDPEVQRVVRAQVVLGELKEHVQPLLNSLPRFHITGLEAESDSSANGQQACILRNQLRNVIQSARDLNGTGSS.

A compositionally biased stretch (polar residues) spans 1 to 16; sequence MATQLPSPTATTSHSG. A disordered region spans residues 1-20; it reads MATQLPSPTATTSHSGNEPR. Positions 27–54 form a DNA-binding region, zn(2)-C6 fungal-type; sequence CNNCSAQKIRCGKQRPACARCVNKKLQC.

The protein localises to the nucleus. In terms of biological role, transcription regulator of the gene cluster that mediates the biosynthesis of elsinochrome C, a perelyenequinone phytotoxin structurally similar to cercosporin. This Phaeosphaeria nodorum (strain SN15 / ATCC MYA-4574 / FGSC 10173) (Glume blotch fungus) protein is Elsinochrome C biosynthesis regulatory protein elcR.